A 296-amino-acid polypeptide reads, in one-letter code: 4-diphosphocytidyl-2-C-methyl-D-erythritol kinase (296 aa).

The active site involves Lys11. 95 to 105 lines the ATP pocket; sequence PVAAGMAGGSS. Asp137 is a catalytic residue.

Belongs to the GHMP kinase family. IspE subfamily.

It carries out the reaction 4-CDP-2-C-methyl-D-erythritol + ATP = 4-CDP-2-C-methyl-D-erythritol 2-phosphate + ADP + H(+). Its pathway is isoprenoid biosynthesis; isopentenyl diphosphate biosynthesis via DXP pathway; isopentenyl diphosphate from 1-deoxy-D-xylulose 5-phosphate: step 3/6. Catalyzes the phosphorylation of the position 2 hydroxy group of 4-diphosphocytidyl-2C-methyl-D-erythritol. In Clostridioides difficile (strain 630) (Peptoclostridium difficile), this protein is 4-diphosphocytidyl-2-C-methyl-D-erythritol kinase.